The sequence spans 362 residues: GDSL esterase/lipase At5g22810 (362 aa).

The N-terminal stretch at 1 to 28 (MGFSGIWLNLYVVFGSLMVFERMVVMVV) is a signal peptide. Catalysis depends on S44, which acts as the Nucleophile. N159, N162, N264, and N329 each carry an N-linked (GlcNAc...) asparagine glycan. Catalysis depends on residues D337 and H340.

It belongs to the 'GDSL' lipolytic enzyme family.

It localises to the secreted. This chain is GDSL esterase/lipase At5g22810, found in Arabidopsis thaliana (Mouse-ear cress).